A 157-amino-acid polypeptide reads, in one-letter code: 6,7-dimethyl-8-ribityllumazine synthase (157 aa).

Residues Phe25, 59–61, and 83–85 contribute to the 5-amino-6-(D-ribitylamino)uracil site; these read AME and AII. 88–89 is a (2S)-2-hydroxy-3-oxobutyl phosphate binding site; it reads ST. Catalysis depends on His91, which acts as the Proton donor. Phe116 lines the 5-amino-6-(D-ribitylamino)uracil pocket. Position 130 (Arg130) interacts with (2S)-2-hydroxy-3-oxobutyl phosphate.

The protein belongs to the DMRL synthase family.

The catalysed reaction is (2S)-2-hydroxy-3-oxobutyl phosphate + 5-amino-6-(D-ribitylamino)uracil = 6,7-dimethyl-8-(1-D-ribityl)lumazine + phosphate + 2 H2O + H(+). It functions in the pathway cofactor biosynthesis; riboflavin biosynthesis; riboflavin from 2-hydroxy-3-oxobutyl phosphate and 5-amino-6-(D-ribitylamino)uracil: step 1/2. Catalyzes the formation of 6,7-dimethyl-8-ribityllumazine by condensation of 5-amino-6-(D-ribitylamino)uracil with 3,4-dihydroxy-2-butanone 4-phosphate. This is the penultimate step in the biosynthesis of riboflavin. This is 6,7-dimethyl-8-ribityllumazine synthase from Lawsonia intracellularis (strain PHE/MN1-00).